Here is a 201-residue protein sequence, read N- to C-terminus: Adenylyl-sulfate kinase (201 aa).

35–42 (GLSGSGKS) contacts ATP. Catalysis depends on Ser109, which acts as the Phosphoserine intermediate.

The protein belongs to the APS kinase family.

The enzyme catalyses adenosine 5'-phosphosulfate + ATP = 3'-phosphoadenylyl sulfate + ADP + H(+). It functions in the pathway sulfur metabolism; hydrogen sulfide biosynthesis; sulfite from sulfate: step 2/3. Its function is as follows. Catalyzes the synthesis of activated sulfate. The protein is Adenylyl-sulfate kinase of Shigella boydii serotype 18 (strain CDC 3083-94 / BS512).